We begin with the raw amino-acid sequence, 275 residues long: Large ribosomal subunit protein uL2 (275 aa).

2 disordered regions span residues 28–59 (KPFAPLLDSQSTTAGRNNNGHITTRHKGGGHK) and 224–275 (AMNP…RHKR). A compositionally biased stretch (polar residues) spans 35–49 (DSQSTTAGRNNNGHI). Basic residues predominate over residues 50–59 (TTRHKGGGHK).

This sequence belongs to the universal ribosomal protein uL2 family. As to quaternary structure, part of the 50S ribosomal subunit. Forms a bridge to the 30S subunit in the 70S ribosome.

Functionally, one of the primary rRNA binding proteins. Required for association of the 30S and 50S subunits to form the 70S ribosome, for tRNA binding and peptide bond formation. It has been suggested to have peptidyltransferase activity; this is somewhat controversial. Makes several contacts with the 16S rRNA in the 70S ribosome. In Paraburkholderia xenovorans (strain LB400), this protein is Large ribosomal subunit protein uL2.